A 177-amino-acid chain; its full sequence is Large ribosomal subunit protein uL6 (177 aa).

This sequence belongs to the universal ribosomal protein uL6 family. In terms of assembly, part of the 50S ribosomal subunit.

Functionally, this protein binds to the 23S rRNA, and is important in its secondary structure. It is located near the subunit interface in the base of the L7/L12 stalk, and near the tRNA binding site of the peptidyltransferase center. The chain is Large ribosomal subunit protein uL6 from Vibrio parahaemolyticus serotype O3:K6 (strain RIMD 2210633).